The following is a 327-amino-acid chain: Putative D-threonate 4-phosphate dehydrogenase (327 aa).

Positions 139 and 140 each coordinate substrate. A divalent metal cation-binding residues include His-169, His-213, and His-268. Residues Lys-276, Asn-285, and Arg-294 each coordinate substrate.

The protein belongs to the PdxA family. PdxA2 subfamily. As to quaternary structure, homodimer. Requires a divalent metal cation as cofactor.

It catalyses the reaction 4-O-phospho-D-threonate + NAD(+) = dihydroxyacetone phosphate + CO2 + NADH. In terms of biological role, catalyzes the NAD-dependent oxidation and subsequent decarboxylation of D-threonate 4-phosphate to produce dihydroxyacetone phosphate (DHAP). The protein is Putative D-threonate 4-phosphate dehydrogenase of Salmonella typhi.